Consider the following 83-residue polypeptide: Hainantoxin-III 4 (83 aa).

A signal peptide spans 1–21 (MKASMYLALAGLVLLFVVGYA). A propeptide spanning residues 22-48 (SESEEKEFPRELLSKIFAVDDFKGKER) is cleaved from the precursor. 3 disulfide bridges follow: Cys-50/Cys-65, Cys-57/Cys-70, and Cys-64/Cys-77. At Leu-81 the chain carries Leucine amide.

The protein belongs to the neurotoxin 10 (Hwtx-1) family. 15 (Hntx-3) subfamily. Monomer. In terms of tissue distribution, expressed by the venom gland.

Its subcellular location is the secreted. Its function is as follows. Selective antagonist of neuronal tetrodotoxin (TTX)-sensitive voltage-gated sodium channels (IC(50)=1270 nM on Nav1.1/SCN1A, 270 nM on Nav1.2/SCN2A, 491 nM on Nav1.3/SCN3A and 232 nM on Nav1.7/SCN9A). This toxin suppress Nav1.7 current amplitude without significantly altering the activation, inactivation, and repriming kinetics. Short extreme depolarizations partially activate the toxin-bound channel, indicating voltage-dependent inhibition of this toxin. This toxin increases the deactivation of the Nav1.7 current after extreme depolarizations. The toxin-Nav1.7 complex is gradually dissociated upon prolonged strong depolarizations in a voltage-dependent manner, and the unbound toxin rebinds to Nav1.7 after a long repolarization. Moreover, analysis of chimeric channels showed that the DIIS3-S4 linker is critical for toxin binding to Nav1.7. These data are consistent with this toxin interacting with Nav1.7 site 4 and trapping the domain II voltage sensor in the closed state. This chain is Hainantoxin-III 4, found in Cyriopagopus hainanus (Chinese bird spider).